The sequence spans 104 residues: L-rhamnose mutarotase (104 aa).

Tyr-18 serves as a coordination point for substrate. The Proton donor role is filled by His-22. Substrate-binding positions include Tyr-41 and 76 to 77 (WW).

This sequence belongs to the rhamnose mutarotase family. As to quaternary structure, homodimer.

The protein resides in the cytoplasm. It catalyses the reaction alpha-L-rhamnose = beta-L-rhamnose. The protein operates within carbohydrate metabolism; L-rhamnose metabolism. Its function is as follows. Involved in the anomeric conversion of L-rhamnose. In Burkholderia ambifaria (strain ATCC BAA-244 / DSM 16087 / CCUG 44356 / LMG 19182 / AMMD) (Burkholderia cepacia (strain AMMD)), this protein is L-rhamnose mutarotase.